We begin with the raw amino-acid sequence, 28 residues long: Phospholipase A2 2 (28 aa).

The protein belongs to the phospholipase A2 family. Group I subfamily. Ca(2+) serves as cofactor. In terms of tissue distribution, expressed by the venom gland.

The protein resides in the secreted. It carries out the reaction a 1,2-diacyl-sn-glycero-3-phosphocholine + H2O = a 1-acyl-sn-glycero-3-phosphocholine + a fatty acid + H(+). In terms of biological role, snake venom phospholipase A2 (PLA2) that inhibits neuromuscular transmission by blocking acetylcholine release from the nerve termini. PLA2 catalyzes the calcium-dependent hydrolysis of the 2-acyl groups in 3-sn-phosphoglycerides. This chain is Phospholipase A2 2, found in Micrurus nigrocinctus (Central American coral snake).